The following is a 1461-amino-acid chain: Neogenin (1461 aa).

Residues Met-1–Ala-33 form the signal peptide. Over Ala-34–Leu-1105 the chain is Extracellular. Ig-like C2-type domains follow at residues Pro-52–Ser-141, Pro-152–Lys-238, Pro-243–Thr-336, and Pro-341–Ile-426. Residue Asn-73 is glycosylated (N-linked (GlcNAc...) asparagine). 3 disulfide bridges follow: Cys-74/Cys-129, Cys-173/Cys-221, and Cys-270/Cys-320. N-linked (GlcNAc...) asparagine glycosylation is present at Asn-210. Asn-326 carries N-linked (GlcNAc...) asparagine glycosylation. An intrachain disulfide couples Cys-362 to Cys-410. 6 Fibronectin type-III domains span residues Ala-441–Glu-535, Pro-541–Asp-631, Ala-636–Ser-731, Val-741–Thr-831, Pro-856–Leu-952, and Pro-957–Ala-1054. Asn-470 and Asn-489 each carry an N-linked (GlcNAc...) asparagine glycan. Residues Asn-639 and Asn-715 are each glycosylated (N-linked (GlcNAc...) asparagine). N-linked (GlcNAc...) asparagine glycosylation is present at Asn-909. The segment at Gly-1041–Thr-1097 is disordered. Basic and acidic residues predominate over residues Pro-1052–Pro-1061. The segment covering Ser-1087–Thr-1097 has biased composition (polar residues). A helical membrane pass occupies residues Leu-1106–Phe-1126. The Cytoplasmic segment spans residues Cys-1127–Ala-1461. Disordered regions lie at residues Lys-1138–Pro-1160, Pro-1174–Ser-1206, Pro-1235–Ser-1276, and Thr-1289–Ser-1381. Phosphoserine occurs at positions 1178 and 1194. Residues Pro-1191–Ser-1206 are compositionally biased toward polar residues. Thr-1198 carries the phosphothreonine modification. Polar residues-rich tracts occupy residues Thr-1289 to Thr-1322 and Ala-1330 to Pro-1349. Positions Ala-1366–Tyr-1375 are enriched in pro residues. Residue Ser-1401 is modified to Phosphoserine. Residue Thr-1404 is modified to Phosphothreonine. 3 positions are modified to phosphoserine: Ser-1432, Ser-1434, and Ser-1435.

This sequence belongs to the immunoglobulin superfamily. DCC family. As to quaternary structure, interacts with MYO10. Interacts with RGMA and RGMB. Interacts with BMP2, BMP4, BMP6, and BMP7. As to expression, widely expressed and also in cancer cell lines.

The protein resides in the cell membrane. Multi-functional cell surface receptor regulating cell adhesion in many diverse developmental processes, including neural tube and mammary gland formation, myogenesis and angiogenesis. Receptor for members of the BMP, netrin, and repulsive guidance molecule (RGM) families. Netrin-Neogenin interactions result in a chemoattractive axon guidance response and cell-cell adhesion, the interaction between NEO1/Neogenin and RGMa and RGMb induces a chemorepulsive response. The protein is Neogenin (NEO1) of Homo sapiens (Human).